A 204-amino-acid polypeptide reads, in one-letter code: RNA-free ribonuclease P (204 aa).

This sequence belongs to the HARP family.

It catalyses the reaction Endonucleolytic cleavage of RNA, removing 5'-extranucleotides from tRNA precursor.. Its function is as follows. RNA-free RNase P that catalyzes the removal of the 5'-leader sequence from pre-tRNA to produce the mature 5'-terminus. This Ignicoccus hospitalis (strain KIN4/I / DSM 18386 / JCM 14125) protein is RNA-free ribonuclease P.